A 591-amino-acid chain; its full sequence is Glucose-6-phosphate isomerase (591 aa).

The Proton donor role is filled by Glu380. Residues His411 and Lys540 contribute to the active site.

The protein belongs to the GPI family. In terms of assembly, homodimer.

The protein resides in the cytoplasm. The enzyme catalyses alpha-D-glucose 6-phosphate = beta-D-fructose 6-phosphate. It participates in carbohydrate degradation; glycolysis; D-glyceraldehyde 3-phosphate and glycerone phosphate from D-glucose: step 2/4. The polypeptide is Glucose-6-phosphate isomerase (GGI.R1) (Plasmodium falciparum).